The primary structure comprises 346 residues: NADH-ubiquinone oxidoreductase chain 2 (346 aa).

The next 11 helical transmembrane spans lie at 3-23 (PLIL…VMAS), 25-45 (HWLM…PILM), 59-79 (YFLT…INLM), 96-116 (IIMT…FWVP), 122-142 (ISLT…MSIL), 149-169 (INLN…GWGG), 178-198 (IMAY…VYNP), 200-220 (LTML…MLFI), 237-257 (APLI…LPPL), 274-294 (SSII…YFYM), and 322-342 (ITLL…TPML).

Belongs to the complex I subunit 2 family. As to quaternary structure, core subunit of respiratory chain NADH dehydrogenase (Complex I) which is composed of 45 different subunits. Interacts with TMEM242.

It localises to the mitochondrion inner membrane. It catalyses the reaction a ubiquinone + NADH + 5 H(+)(in) = a ubiquinol + NAD(+) + 4 H(+)(out). Functionally, core subunit of the mitochondrial membrane respiratory chain NADH dehydrogenase (Complex I) which catalyzes electron transfer from NADH through the respiratory chain, using ubiquinone as an electron acceptor. Essential for the catalytic activity and assembly of complex I. This is NADH-ubiquinone oxidoreductase chain 2 from Equus asinus (Donkey).